An 81-amino-acid polypeptide reads, in one-letter code: Cytotoxin 1 (81 aa).

An N-terminal signal peptide occupies residues 1 to 21 (MKTLLLTLVVVTIVCLDLGYT). Disulfide bonds link Cys24–Cys42, Cys35–Cys59, Cys63–Cys74, and Cys75–Cys80.

Belongs to the three-finger toxin family. Short-chain subfamily. Type IA cytotoxin sub-subfamily. As to quaternary structure, monomer in solution; Homodimer and oligomer in the presence of negatively charged lipids forming a pore with a size ranging between 20 and 30 Angstroms. As to expression, expressed by the venom gland.

It localises to the secreted. The protein localises to the target cell membrane. Functionally, basic protein that binds to cell membrane and depolarizes cardiomyocytes. It also shows lytic activities on many other cells, including red blood cells. Interaction with sulfatides in the cell membrane induces pore formation and cell internalization and is responsible for cytotoxicity in cardiomyocytes. It targets the mitochondrial membrane and induces mitochondrial swelling and fragmentation. It binds to the integrin alpha-V/beta-3 (ITGAV/ITGB3) with a moderate affinity and inhibits protein kinases C. It also binds with high affinity to heparin. It also causes skeletal muscle necrosis after intramuscular injection into mice. The polypeptide is Cytotoxin 1 (Naja atra (Chinese cobra)).